Reading from the N-terminus, the 244-residue chain is Adenosine 5'-phosphosulfate reductase (244 aa).

Cysteine 129, cysteine 130, cysteine 212, and cysteine 215 together coordinate [4Fe-4S] cluster. The active-site Nucleophile; cysteine thiosulfonate intermediate is cysteine 240.

It belongs to the PAPS reductase family. CysH subfamily. The cofactor is [4Fe-4S] cluster.

Its subcellular location is the cytoplasm. The catalysed reaction is [thioredoxin]-disulfide + sulfite + AMP + 2 H(+) = adenosine 5'-phosphosulfate + [thioredoxin]-dithiol. It participates in sulfur metabolism; hydrogen sulfide biosynthesis; sulfite from sulfate. Its function is as follows. Catalyzes the formation of sulfite from adenosine 5'-phosphosulfate (APS) using thioredoxin as an electron donor. In Neisseria meningitidis serogroup A / serotype 4A (strain DSM 15465 / Z2491), this protein is Adenosine 5'-phosphosulfate reductase.